Here is a 406-residue protein sequence, read N- to C-terminus: Bifunctional enzyme IspD/IspF (406 aa).

The segment at 1-247 (MSLIRVNGEA…TLFFNPAKDT (247 aa)) is 2-C-methyl-D-erythritol 4-phosphate cytidylyltransferase. The 2-C-methyl-D-erythritol 2,4-cyclodiphosphate synthase stretch occupies residues 248-406 (FIGMGFDTHA…HVSMRYKQKL (159 aa)). Residues Asp-254 and His-256 each coordinate a divalent metal cation. 4-CDP-2-C-methyl-D-erythritol 2-phosphate-binding positions include 254 to 256 (DTH) and 280 to 281 (HS). His-288 serves as a coordination point for a divalent metal cation. 4-CDP-2-C-methyl-D-erythritol 2-phosphate-binding positions include 302–304 (DIG), 307–311 (FPDND), 378–381 (TTME), Phe-385, and Lys-388.

In the N-terminal section; belongs to the IspD/TarI cytidylyltransferase family. IspD subfamily. It in the C-terminal section; belongs to the IspF family. A divalent metal cation serves as cofactor.

The catalysed reaction is 2-C-methyl-D-erythritol 4-phosphate + CTP + H(+) = 4-CDP-2-C-methyl-D-erythritol + diphosphate. The enzyme catalyses 4-CDP-2-C-methyl-D-erythritol 2-phosphate = 2-C-methyl-D-erythritol 2,4-cyclic diphosphate + CMP. It functions in the pathway isoprenoid biosynthesis; isopentenyl diphosphate biosynthesis via DXP pathway; isopentenyl diphosphate from 1-deoxy-D-xylulose 5-phosphate: step 2/6. Its pathway is isoprenoid biosynthesis; isopentenyl diphosphate biosynthesis via DXP pathway; isopentenyl diphosphate from 1-deoxy-D-xylulose 5-phosphate: step 4/6. In terms of biological role, bifunctional enzyme that catalyzes the formation of 4-diphosphocytidyl-2-C-methyl-D-erythritol from CTP and 2-C-methyl-D-erythritol 4-phosphate (MEP) (IspD), and catalyzes the conversion of 4-diphosphocytidyl-2-C-methyl-D-erythritol 2-phosphate (CDP-ME2P) to 2-C-methyl-D-erythritol 2,4-cyclodiphosphate (ME-CPP) with a corresponding release of cytidine 5-monophosphate (CMP) (IspF). This chain is Bifunctional enzyme IspD/IspF, found in Helicobacter pylori (strain ATCC 700392 / 26695) (Campylobacter pylori).